We begin with the raw amino-acid sequence, 353 residues long: 3'(2'),5'-bisphosphate nucleotidase (353 aa).

Asp50 serves as the catalytic Proton acceptor. Residues Glu73, Asp136, Ile138, and Asp139 each contribute to the Mg(2+) site. Thr141 (proton acceptor) is an active-site residue. Residues Thr141, His232, Ser256, Lys259, Arg273, and Asp286 each coordinate adenosine 3',5'-bisphosphate. His232, Ser256, Lys259, Arg273, and Asp286 together coordinate AMP. Asp286 is a binding site for Mg(2+).

This sequence belongs to the inositol monophosphatase superfamily. Mg(2+) is required as a cofactor.

It carries out the reaction 3'-phosphoadenylyl sulfate + H2O = adenosine 5'-phosphosulfate + phosphate. It catalyses the reaction adenosine 3',5'-bisphosphate + H2O = AMP + phosphate. The catalysed reaction is adenosine 2',5'-bisphosphate + H2O = AMP + phosphate. The enzyme catalyses 1D-myo-inositol 1,4-bisphosphate + H2O = 1D-myo-inositol 4-phosphate + phosphate. It carries out the reaction 1D-myo-inositol 1,3,4-trisphosphate + H2O = 1D-myo-inositol 3,4-bisphosphate + phosphate. With respect to regulation, inhibited by Li(+) and Na(+). In terms of biological role, phosphatase that converts adenosine 3'-phosphate 5'-phosphosulfate (PAPS) to adenosine 5'-phosphosulfate (APS) and 3'(2')-phosphoadenosine 5'-phosphate (PAP) to AMP. May regulate the flux of sulfur in the sulfur-activation pathway by converting PAPS to APS. Is also able to hydrolyze inositol 1,4-bisphosphate (Ins(1,4)P2) and inositol 1,3,4-trisphosphate (Ins(1,3,4)P3), but is not active on inositol 1,4,5-trisphosphate, inositol 1-phosphate, fructose 1,6-bisphosphate, AMP and ATP. Confers resistance to lithium. This is 3'(2'),5'-bisphosphate nucleotidase (tol1) from Schizosaccharomyces pombe (strain 972 / ATCC 24843) (Fission yeast).